The following is a 176-amino-acid chain: Large ribosomal subunit protein uL6 (176 aa).

Basic and acidic residues predominate over residues 151–170 (RPPEPYKGKGVRYADEQVRR). The interval 151-176 (RPPEPYKGKGVRYADEQVRRKEAKKK) is disordered.

This sequence belongs to the universal ribosomal protein uL6 family. Part of the 50S ribosomal subunit.

Functionally, this protein binds to the 23S rRNA, and is important in its secondary structure. It is located near the subunit interface in the base of the L7/L12 stalk, and near the tRNA binding site of the peptidyltransferase center. The polypeptide is Large ribosomal subunit protein uL6 (Shewanella piezotolerans (strain WP3 / JCM 13877)).